A 611-amino-acid chain; its full sequence is Chaperone protein DnaK (611 aa).

At T173 the chain carries Phosphothreonine; by autocatalysis. Residues 579-592 (AAGQAEGAQGAQDA) show a composition bias toward low complexity. Residues 579 to 598 (AAGQAEGAQGAQDAGAKKDN) are disordered.

The protein belongs to the heat shock protein 70 family.

Acts as a chaperone. This chain is Chaperone protein DnaK, found in Bacillus cereus (strain AH187).